The following is a 562-amino-acid chain: Protein FAM83D-B (562 aa).

The interval 424–472 is disordered; it reads ITTQTTETSQCTTQTPAPTSSVARLSNSSNSSSSSFSSASTTSTGSNCS. The span at 425–472 shows a compositional bias: low complexity; it reads TTQTTETSQCTTQTPAPTSSVARLSNSSNSSSSSFSSASTTSTGSNCS.

Belongs to the FAM83 family.

The protein localises to the cytoplasm. The protein resides in the cytoskeleton. It is found in the spindle. It localises to the spindle pole. Its function is as follows. May regulate cell proliferation, growth, migration and epithelial to mesenchymal transition. May also be important for proper chromosome congression and alignment during mitosis. The polypeptide is Protein FAM83D-B (Xenopus laevis (African clawed frog)).